Reading from the N-terminus, the 386-residue chain is 1-deoxy-D-xylulose 5-phosphate reductoisomerase (386 aa).

The NADPH site is built by T10, G11, S12, I13, G36, N38, and N122. Residue K123 coordinates 1-deoxy-D-xylulose 5-phosphate. Position 124 (E124) interacts with NADPH. D148 provides a ligand contact to Mn(2+). Residues S149, E150, S174, and H197 each contribute to the 1-deoxy-D-xylulose 5-phosphate site. Residue E150 coordinates Mn(2+). G203 provides a ligand contact to NADPH. 1-deoxy-D-xylulose 5-phosphate-binding residues include S210, N215, K216, and E219. E219 contacts Mn(2+).

It belongs to the DXR family. Mg(2+) serves as cofactor. Mn(2+) is required as a cofactor.

It carries out the reaction 2-C-methyl-D-erythritol 4-phosphate + NADP(+) = 1-deoxy-D-xylulose 5-phosphate + NADPH + H(+). It participates in isoprenoid biosynthesis; isopentenyl diphosphate biosynthesis via DXP pathway; isopentenyl diphosphate from 1-deoxy-D-xylulose 5-phosphate: step 1/6. In terms of biological role, catalyzes the NADPH-dependent rearrangement and reduction of 1-deoxy-D-xylulose-5-phosphate (DXP) to 2-C-methyl-D-erythritol 4-phosphate (MEP). This Geotalea uraniireducens (strain Rf4) (Geobacter uraniireducens) protein is 1-deoxy-D-xylulose 5-phosphate reductoisomerase.